The chain runs to 251 residues: NAD kinase (251 aa).

Aspartate 51 acts as the Proton acceptor in catalysis. Residues 51 to 52 (DG), lysine 56, 113 to 114 (NE), lysine 124, histidine 140, aspartate 142, 153 to 158 (TGYSLS), and alanine 177 each bind NAD(+).

This sequence belongs to the NAD kinase family. A divalent metal cation serves as cofactor.

Its subcellular location is the cytoplasm. It carries out the reaction NAD(+) + ATP = ADP + NADP(+) + H(+). Functionally, involved in the regulation of the intracellular balance of NAD and NADP, and is a key enzyme in the biosynthesis of NADP. Catalyzes specifically the phosphorylation on 2'-hydroxyl of the adenosine moiety of NAD to yield NADP. This chain is NAD kinase, found in Thermosipho melanesiensis (strain DSM 12029 / CIP 104789 / BI429).